The following is a 363-amino-acid chain: Aminomethyltransferase (363 aa).

This sequence belongs to the GcvT family. The glycine cleavage system is composed of four proteins: P, T, L and H.

The catalysed reaction is N(6)-[(R)-S(8)-aminomethyldihydrolipoyl]-L-lysyl-[protein] + (6S)-5,6,7,8-tetrahydrofolate = N(6)-[(R)-dihydrolipoyl]-L-lysyl-[protein] + (6R)-5,10-methylene-5,6,7,8-tetrahydrofolate + NH4(+). Its function is as follows. The glycine cleavage system catalyzes the degradation of glycine. The chain is Aminomethyltransferase from Teredinibacter turnerae (strain ATCC 39867 / T7901).